The chain runs to 113 residues: Large ribosomal subunit protein uL22 (113 aa).

This sequence belongs to the universal ribosomal protein uL22 family. Part of the 50S ribosomal subunit.

Functionally, this protein binds specifically to 23S rRNA; its binding is stimulated by other ribosomal proteins, e.g. L4, L17, and L20. It is important during the early stages of 50S assembly. It makes multiple contacts with different domains of the 23S rRNA in the assembled 50S subunit and ribosome. The globular domain of the protein is located near the polypeptide exit tunnel on the outside of the subunit, while an extended beta-hairpin is found that lines the wall of the exit tunnel in the center of the 70S ribosome. This chain is Large ribosomal subunit protein uL22, found in Thermus thermophilus (strain ATCC BAA-163 / DSM 7039 / HB27).